Consider the following 396-residue polypeptide: S100P-binding protein (396 aa).

Residues 145–249 (CDPVLDKDKI…RKNSGSHKSG (105 aa)) form a disordered region. 2 stretches are compositionally biased toward basic and acidic residues: residues 148–161 (VLDK…KETE) and 168–185 (EQTR…RCTE). Composition is skewed to polar residues over residues 202-215 (SSPS…TASD) and 227-246 (VFSQ…SGSH).

Interacts with S100P.

It localises to the nucleus. The polypeptide is S100P-binding protein (Mus musculus (Mouse)).